The following is a 539-amino-acid chain: Membrane protein insertase YidC (539 aa).

Residues 6-26 (VILAVALSFAVLLGWQFLFPP) form a helical membrane-spanning segment. Residues 28-63 (PQQPAPAQQEQTAQPNQAVDSSVAGPVSNQLPDPAS) are disordered. The segment covering 32–45 (APAQQEQTAQPNQA) has biased composition (low complexity). The segment covering 54 to 63 (VSNQLPDPAS) has biased composition (polar residues). Helical transmembrane passes span 349–369 (YGIA…PLSH), 421–441 (MLLQ…TVAL), and 496–516 (IMMF…SGLV).

Belongs to the OXA1/ALB3/YidC family. Type 1 subfamily. In terms of assembly, interacts with the Sec translocase complex via SecD. Specifically interacts with transmembrane segments of nascent integral membrane proteins during membrane integration.

It localises to the cell inner membrane. Required for the insertion and/or proper folding and/or complex formation of integral membrane proteins into the membrane. Involved in integration of membrane proteins that insert both dependently and independently of the Sec translocase complex, as well as at least some lipoproteins. Aids folding of multispanning membrane proteins. The polypeptide is Membrane protein insertase YidC (Maridesulfovibrio salexigens (strain ATCC 14822 / DSM 2638 / NCIMB 8403 / VKM B-1763) (Desulfovibrio salexigens)).